Here is a 670-residue protein sequence, read N- to C-terminus: UvrABC system protein B (670 aa).

The region spanning Glu-26–Arg-183 is the Helicase ATP-binding domain. Gly-39–Thr-46 contacts ATP. Positions Tyr-92–Val-115 match the Beta-hairpin motif. In terms of domain architecture, Helicase C-terminal spans Gln-431–Leu-597. Positions Asp-630–Gln-665 constitute a UVR domain.

This sequence belongs to the UvrB family. In terms of assembly, forms a heterotetramer with UvrA during the search for lesions. Interacts with UvrC in an incision complex.

It localises to the cytoplasm. Its function is as follows. The UvrABC repair system catalyzes the recognition and processing of DNA lesions. A damage recognition complex composed of 2 UvrA and 2 UvrB subunits scans DNA for abnormalities. Upon binding of the UvrA(2)B(2) complex to a putative damaged site, the DNA wraps around one UvrB monomer. DNA wrap is dependent on ATP binding by UvrB and probably causes local melting of the DNA helix, facilitating insertion of UvrB beta-hairpin between the DNA strands. Then UvrB probes one DNA strand for the presence of a lesion. If a lesion is found the UvrA subunits dissociate and the UvrB-DNA preincision complex is formed. This complex is subsequently bound by UvrC and the second UvrB is released. If no lesion is found, the DNA wraps around the other UvrB subunit that will check the other stand for damage. This Serratia proteamaculans (strain 568) protein is UvrABC system protein B.